Here is a 259-residue protein sequence, read N- to C-terminus: Heat-labile enterotoxin IIA, A chain (259 aa).

The first 18 residues, 1–18 (MIKHVLLFFVFISFSVSA), serve as a signal peptide directing secretion. 23 to 37 (RADSRTPDEIRRAGG) provides a ligand contact to NAD(+). Residue Glu-128 is part of the active site. A disulfide bridge links Cys-203 with Cys-215.

The protein belongs to the enterotoxin A family. Heterohexamer of one A chain and of five B chains.

In terms of biological role, the biological activity of the toxin is produced by the A chain, which activates intracellular adenyl cyclase. This Escherichia coli protein is Heat-labile enterotoxin IIA, A chain.